The sequence spans 328 residues: Tetraacyldisaccharide 4'-kinase (328 aa).

55–62 (TAGGNGKT) serves as a coordination point for ATP.

This sequence belongs to the LpxK family.

The catalysed reaction is a lipid A disaccharide + ATP = a lipid IVA + ADP + H(+). It functions in the pathway glycolipid biosynthesis; lipid IV(A) biosynthesis; lipid IV(A) from (3R)-3-hydroxytetradecanoyl-[acyl-carrier-protein] and UDP-N-acetyl-alpha-D-glucosamine: step 6/6. In terms of biological role, transfers the gamma-phosphate of ATP to the 4'-position of a tetraacyldisaccharide 1-phosphate intermediate (termed DS-1-P) to form tetraacyldisaccharide 1,4'-bis-phosphate (lipid IVA). This chain is Tetraacyldisaccharide 4'-kinase, found in Escherichia fergusonii (strain ATCC 35469 / DSM 13698 / CCUG 18766 / IAM 14443 / JCM 21226 / LMG 7866 / NBRC 102419 / NCTC 12128 / CDC 0568-73).